The primary structure comprises 474 residues: Dihydrolipoyl dehydrogenase (474 aa).

FAD contacts are provided by residues 34–42, lysine 51, and glycine 114; that span reads EKEKLGGTC. A disulfide bridge links cysteine 42 with cysteine 47. Residues 188–192, glutamate 211, valine 245, and 278–281 each bind NAD(+); these read GGGVI and SIGR. Residues aspartate 320 and alanine 328 each contribute to the FAD site. Histidine 453 functions as the Proton acceptor in the catalytic mechanism.

It belongs to the class-I pyridine nucleotide-disulfide oxidoreductase family. In terms of assembly, homodimer. Requires FAD as cofactor.

It is found in the cytoplasm. The catalysed reaction is N(6)-[(R)-dihydrolipoyl]-L-lysyl-[protein] + NAD(+) = N(6)-[(R)-lipoyl]-L-lysyl-[protein] + NADH + H(+). In terms of biological role, the branched-chain alpha-keto dehydrogenase complex catalyzes the overall conversion of alpha-keto acids to acyl-CoA and CO(2). It contains multiple copies of 3 enzymatic components: branched-chain alpha-keto acid decarboxylase (E1), lipoamide acyltransferase (E2) and lipoamide dehydrogenase (E3). This chain is Dihydrolipoyl dehydrogenase (bfmBC), found in Bacillus subtilis (strain 168).